The primary structure comprises 275 residues: MAIHLYKTSTPSTRNGAVDSQVKSNPRNNLIYGQHHCGKGRNARGIITAGHRGGGHKRLYRKIDFRRNEKDISGRIVTIEYDPNRNAYICLIHYGDGEKRYILHPRGAIIGDTIVSGTEVPISMGNALPLSATDMPLGTAIHNIEITLGKGGQLARAAGAVAKLIAKEGKSATLRLPSGEVRLISKNCSATVGQVGNVGVNQKSLGRAGSKCWLGKRPVVRGVVMNPVDHPHGGGEGRSPIGRKKPTTPWGYPALGRRSRKRNKYSDSLILRRRK.

Disordered stretches follow at residues 1–22 (MAIH…DSQV) and 226–275 (NPVD…RRRK).

This sequence belongs to the universal ribosomal protein uL2 family. Part of the 50S ribosomal subunit.

Its subcellular location is the plastid. It is found in the chloroplast. This chain is Large ribosomal subunit protein uL2cz (rpl2-A), found in Chloranthus spicatus (Chulantree).